The primary structure comprises 28 residues: Peptide 2 (28 aa).

The protein belongs to the short scorpion toxin superfamily. Potassium channel inhibitor family. Alpha-KTx 09 subfamily. In terms of tissue distribution, expressed by the venom gland.

It localises to the secreted. Its function is as follows. Blocks potassium channels. This chain is Peptide 2, found in Hottentotta tamulus sindicus (Scorpion).